The following is a 548-amino-acid chain: Chaperonin GroEL (548 aa).

Residues 30–33 (TLGP), lysine 51, 87–91 (DGTTT), glycine 415, 479–481 (NAA), and aspartate 495 each bind ATP.

This sequence belongs to the chaperonin (HSP60) family. As to quaternary structure, forms a cylinder of 14 subunits composed of two heptameric rings stacked back-to-back. Interacts with the co-chaperonin GroES.

Its subcellular location is the cytoplasm. The enzyme catalyses ATP + H2O + a folded polypeptide = ADP + phosphate + an unfolded polypeptide.. In terms of biological role, together with its co-chaperonin GroES, plays an essential role in assisting protein folding. The GroEL-GroES system forms a nano-cage that allows encapsulation of the non-native substrate proteins and provides a physical environment optimized to promote and accelerate protein folding. This chain is Chaperonin GroEL, found in Pseudomonas fluorescens (strain SBW25).